A 148-amino-acid chain; its full sequence is Putative nickel-responsive regulator (148 aa).

Ni(2+) contacts are provided by H88, H99, H101, and C107.

The protein belongs to the transcriptional regulatory CopG/NikR family. Ni(2+) serves as cofactor.

Transcriptional regulator. The sequence is that of Putative nickel-responsive regulator from Helicobacter pylori (strain Shi470).